Reading from the N-terminus, the 501-residue chain is Ammonium transporter 1 member 1 (501 aa).

The next 10 helical transmembrane spans lie at 8–28, 46–66, 81–101, 128–148, 152–172, 199–219, 243–263, 333–353, 366–386, and 419–439; these read LAVL…GQLG, LLFS…LCAG, VLDA…FAFG, FLYQ…SIAE, FVAY…VVSH, FAGS…GALI, LVVL…PGSF, VVEP…LLGC, LEAA…TALF, and LIQI…LFFI. Phosphothreonine is present on Thr460. Residues Ser475, Ser488, Ser490, and Ser492 each carry the phosphoserine modification.

This sequence belongs to the ammonia transporter channel (TC 1.A.11.2) family. As to quaternary structure, self interacts. Interacts with the receptor protein kinases CEPR2, At2g28990 and PAM74. Highly expressed in roots. Expressed in root tips, root hairs, root epidermis, rhizodermis, cortex and pericycle. Expressed in leaves epidermal and mesophyll cells.

The protein localises to the cell membrane. Functionally, high affinity ammonium transporter probably involved in ammonium uptake from the soil, long-distance transport to the shoots and re-uptake of apoplastic ammonium that derives from photorespiration in shoots. Contributes with AMT1-3 to the overall ammonium uptake capacity in roots under nitrogen-deficiency conditions. The polypeptide is Ammonium transporter 1 member 1 (AMT1-1) (Arabidopsis thaliana (Mouse-ear cress)).